The chain runs to 940 residues: Isoleucine--tRNA ligase (940 aa).

The 'HIGH' region signature appears at 58–68 (PYANGNIHIGH). E563 is a binding site for L-isoleucyl-5'-AMP. A 'KMSKS' region motif is present at residues 604-608 (KMSKS). Residue K607 participates in ATP binding. 4 residues coordinate Zn(2+): C903, C906, C923, and C926.

This sequence belongs to the class-I aminoacyl-tRNA synthetase family. IleS type 1 subfamily. As to quaternary structure, monomer. Zn(2+) is required as a cofactor.

The protein resides in the cytoplasm. It carries out the reaction tRNA(Ile) + L-isoleucine + ATP = L-isoleucyl-tRNA(Ile) + AMP + diphosphate. Its function is as follows. Catalyzes the attachment of isoleucine to tRNA(Ile). As IleRS can inadvertently accommodate and process structurally similar amino acids such as valine, to avoid such errors it has two additional distinct tRNA(Ile)-dependent editing activities. One activity is designated as 'pretransfer' editing and involves the hydrolysis of activated Val-AMP. The other activity is designated 'posttransfer' editing and involves deacylation of mischarged Val-tRNA(Ile). This chain is Isoleucine--tRNA ligase, found in Buchnera aphidicola subsp. Acyrthosiphon pisum (strain 5A).